We begin with the raw amino-acid sequence, 406 residues long: uncharacterized protein (406 aa).

G2 carries N-myristoyl glycine; by host lipidation. Residues Q291–I406 are disordered. Over residues T296 to S310 the composition is skewed to basic and acidic residues. The segment covering T311 to Q323 has biased composition (polar residues). 3 stretches are compositionally biased toward low complexity: residues P324–E333, E341–T351, and T359–E369. The span at F370–I406 shows a compositional bias: polar residues.

This is an uncharacterized protein from Acanthamoeba polyphaga (Amoeba).